The chain runs to 39 residues: GTWDDIGQGIGRVAYWVGKAMGNMSDVNQASRINRKKKH.

As to quaternary structure, bacteriocin activity requires interaction of alpha and beta peptides in a molar ratio of 7:1 or 8:1 respectively.

In terms of biological role, kills Lactococci. The sequence is that of Bacteriocin lactococcin-G subunit alpha from Lactococcus lactis subsp. lactis (Streptococcus lactis).